A 301-amino-acid polypeptide reads, in one-letter code: GTPase Era (301 aa).

An Era-type G domain is found at 7 to 175 (YCGFIAIVGR…AGIVRKHLPE (169 aa)). Residues 15 to 22 (GRPNVGKS) are G1. Position 15 to 22 (15 to 22 (GRPNVGKS)) interacts with GTP. Positions 41–45 (QTTRH) are G2. A G3 region spans residues 62–65 (DTPG). GTP contacts are provided by residues 62–66 (DTPGL) and 124–127 (NKVD). The tract at residues 124–127 (NKVD) is G4. The G5 stretch occupies residues 154–156 (ISA). One can recognise a KH type-2 domain in the interval 206 to 283 (LGAELPYSVT…HLELWVKVKS (78 aa)).

It belongs to the TRAFAC class TrmE-Era-EngA-EngB-Septin-like GTPase superfamily. Era GTPase family. In terms of assembly, monomer.

Its subcellular location is the cytoplasm. It localises to the cell inner membrane. In terms of biological role, an essential GTPase that binds both GDP and GTP, with rapid nucleotide exchange. Plays a role in 16S rRNA processing and 30S ribosomal subunit biogenesis and possibly also in cell cycle regulation and energy metabolism. In Salmonella heidelberg (strain SL476), this protein is GTPase Era.